Here is a 116-residue protein sequence, read N- to C-terminus: Cocaine- and amphetamine-regulated transcript protein (116 aa).

A signal peptide spans methionine 1–alanine 27. Tyrosine 41 carries the post-translational modification Phosphotyrosine. At serine 48 the chain carries Phosphoserine. Intrachain disulfides connect cysteine 82–cysteine 100, cysteine 88–cysteine 108, and cysteine 102–cysteine 115.

Belongs to the CART family. Hypothalamus. Found in neurons of the ventrolateral part of the arcuate nucleus, in the external zone of the median eminence, and also found in terminals in the periventricular part of the paraventricular nucleus.

Its subcellular location is the secreted. Satiety factor closely associated with the actions of leptin and neuropeptide Y; this anorectic peptide inhibits both normal and starvation-induced feeding and completely blocks the feeding response induced by neuropeptide Y and regulated by leptin in the hypothalamus. It promotes neuronal development and survival in vitro. This chain is Cocaine- and amphetamine-regulated transcript protein (CARTPT), found in Homo sapiens (Human).